The following is a 37-amino-acid chain: Large ribosomal subunit protein bL36c (37 aa).

It belongs to the bacterial ribosomal protein bL36 family.

The protein resides in the plastid. The protein localises to the chloroplast. The protein is Large ribosomal subunit protein bL36c of Phalaenopsis aphrodite subsp. formosana (Moth orchid).